Here is a 528-residue protein sequence, read N- to C-terminus: Na(+)/H(+) antiporter NhaB (528 aa).

Transmembrane regions (helical) follow at residues 29–49 (LIIN…LLVI), 52–72 (IFTL…LLAI), 95–115 (VLLL…LLLF), 139–159 (AFLS…AVAV), 203–223 (LLMH…VGEP), 248–268 (VPVF…KIFG), 304–324 (AFIG…VGLI), 349–369 (EEAL…AVII), 390–410 (LVIF…VFVG), 448–468 (ATPN…APLI), and 476–496 (VWMA…AIEL).

Belongs to the NhaB Na(+)/H(+) (TC 2.A.34) antiporter family.

It localises to the cell inner membrane. It catalyses the reaction 2 Na(+)(in) + 3 H(+)(out) = 2 Na(+)(out) + 3 H(+)(in). Its function is as follows. Na(+)/H(+) antiporter that extrudes sodium in exchange for external protons. This Shewanella woodyi (strain ATCC 51908 / MS32) protein is Na(+)/H(+) antiporter NhaB.